A 130-amino-acid polypeptide reads, in one-letter code: uncharacterized protein (130 aa).

This is an uncharacterized protein from Schizosaccharomyces pombe (strain 972 / ATCC 24843) (Fission yeast).